The sequence spans 284 residues: Nucleotide-binding protein Sputw3181_3461 (284 aa).

8–15 (GRSGSGKS) serves as a coordination point for ATP. 56-59 (DVRN) provides a ligand contact to GTP.

Belongs to the RapZ-like family.

Functionally, displays ATPase and GTPase activities. This is Nucleotide-binding protein Sputw3181_3461 from Shewanella sp. (strain W3-18-1).